The following is a 660-amino-acid chain: E3 ubiquitin-protein ligase ORTHRUS 3 (660 aa).

The PHD-type zinc finger occupies 12–63; it reads EGVCMRCKSMPPPEESLTCGTCVTPWHVSCLLSPPETLSATLQWLCPDCSGE. The disordered stretch occupies residues 107–129; the sequence is QLLSGKGVVDEDDEEEKKKTSKG. The RING-type 1 zinc-finger motif lies at 141–197; it reads CSFCMQSLQKPVSVRVLFALALMLVWFLESTPCGHNACLKCFLKWMGQGHRSCGTCR. Residues 285 to 434 enclose the YDG domain; the sequence is VRNQGLLVGE…CRFLFVRCDN (150 aa). An RING-type 2 zinc finger spans residues 528–585; it reads CQICQKVMTNPVTTPCAHNFCKACLESKFAGTALVRERGSGGRKLRSQKSVMKCPCCP. Positions 593–622 form a coiled coil; it reads QNPQVNREVAEVIEKLKKQEEEENAKSLDE. 2 stretches are compositionally biased toward basic and acidic residues: residues 610-621 and 637-646; these read KQEEEENAKSLD and QPKKRIKLDT. The segment at 610 to 660 is disordered; sequence KQEEEENAKSLDEGQCSGTSHEEEDDEQPKKRIKLDTDAEVSATVVESDMK.

Its subcellular location is the nucleus. The catalysed reaction is S-ubiquitinyl-[E2 ubiquitin-conjugating enzyme]-L-cysteine + [acceptor protein]-L-lysine = [E2 ubiquitin-conjugating enzyme]-L-cysteine + N(6)-ubiquitinyl-[acceptor protein]-L-lysine.. It functions in the pathway protein modification; protein ubiquitination. Functionally, E3 ubiquitin-protein ligase. May participate in CpG methylation-dependent transcriptional regulation. The sequence is that of E3 ubiquitin-protein ligase ORTHRUS 3 (ORTH3) from Arabidopsis thaliana (Mouse-ear cress).